A 637-amino-acid polypeptide reads, in one-letter code: DNA mismatch repair protein MutL (637 aa).

The span at 343–352 shows a compositional bias: polar residues; that stretch reads QQSPDRQVSP. A disordered region spans residues 343–411; sequence QQSPDRQVSP…SARNGDVSLP (69 aa). Residues 365 to 380 show a composition bias toward basic and acidic residues; that stretch reads SIERKPSVSYDVRDSH. Low complexity predominate over residues 388–397; sequence YSSGSSSYRS.

This sequence belongs to the DNA mismatch repair MutL/HexB family.

In terms of biological role, this protein is involved in the repair of mismatches in DNA. It is required for dam-dependent methyl-directed DNA mismatch repair. May act as a 'molecular matchmaker', a protein that promotes the formation of a stable complex between two or more DNA-binding proteins in an ATP-dependent manner without itself being part of a final effector complex. This Shewanella halifaxensis (strain HAW-EB4) protein is DNA mismatch repair protein MutL.